The sequence spans 166 residues: Large ribosomal subunit protein uL10 (166 aa).

This sequence belongs to the universal ribosomal protein uL10 family. Part of the ribosomal stalk of the 50S ribosomal subunit. The N-terminus interacts with L11 and the large rRNA to form the base of the stalk. The C-terminus forms an elongated spine to which L12 dimers bind in a sequential fashion forming a multimeric L10(L12)X complex.

Functionally, forms part of the ribosomal stalk, playing a central role in the interaction of the ribosome with GTP-bound translation factors. This is Large ribosomal subunit protein uL10 from Staphylococcus haemolyticus (strain JCSC1435).